The primary structure comprises 150 residues: MHGCNCNRVSGHLSAVRSSGLENGPFGPSGFGPSMWFTMHSGAAERAIRGGYLTENEKAAWESWLRNLWVCIPCESCRRHYMGIVNAVDFGSVNTGDKVFRLTVDIHNMVNARLNKPHVTLQKAICIYGLDTKLGPASTITFRANTSTFN.

Positions 24-128 constitute an ERV/ALR sulfhydryl oxidase domain; sequence GPFGPSGFGP…VTLQKAICIY (105 aa). An intrachain disulfide couples cysteine 74 to cysteine 77.

It depends on FAD as a cofactor.

The catalysed reaction is 2 R'C(R)SH + O2 = R'C(R)S-S(R)CR' + H2O2. FAD-dependent sulfhydryl oxidase that catalyzes disulfide bond formation. In Dryophytes versicolor (chameleon treefrog), this protein is Putative FAD-linked sulfhydryl oxidase 088R.